Consider the following 447-residue polypeptide: SPARC-related modular calcium-binding protein 2 (447 aa).

The N-terminal stretch at 1–21 (MLPPQLCWLPLLAALLPPVPA) is a signal peptide. The region spanning 34–86 (QDKDRDCSLDCPSSPQKPLCASDGRTFLSRCEFQRAKCKDPQLEIAHRGNCKD) is the Kazal-like domain. 6 disulfides stabilise this stretch: C40–C71, C44–C64, C53–C84, C90–C113, C124–C131, and C133–C153. One can recognise a Thyroglobulin type-1 1 domain in the interval 87–153 (VSRCVAERKY…TAVAHKTPRC (67 aa)). Residues 147-230 (AHKTPRCPGS…QSALEEAKQP (84 aa)) are disordered. A compositionally biased stretch (basic and acidic residues) spans 161–172 (VPQREGAGKADD). The N-linked (GlcNAc...) asparagine glycan is linked to N206. A compositionally biased stretch (polar residues) spans 206 to 216 (NKTNKNSASSC). Residues 213 to 281 (ASSCDQEHQS…TSTRYEQPKC (69 aa)) form the Thyroglobulin type-1 2 domain. 3 cysteine pairs are disulfide-bonded: C216/C240, C251/C258, and C260/C281. Basic and acidic residues predominate over residues 217 to 230 (DQEHQSALEEAKQP). 2 EF-hand domains span residues 347–382 (LEER…LRKK) and 384–419 (KPKK…TREE). Ca(2+)-binding residues include D360, N362, S364, D366, E371, D397, N399, D401, S403, and E408. Residue N362 is glycosylated (N-linked (GlcNAc...) asparagine). Positions 416–447 (TREEGKANTRKRHTPRGNAESSSSNRQPRKQG) are disordered.

Binds various proteins from the extracellular matrix. Post-translationally, N-glycosylated. As to expression, strongly expressed in ovary, followed by heart, muscle, spleen, brain, thymus, lung, liver, kidney, spleen, testis, ovary and skeletal muscle.

Its subcellular location is the secreted. It localises to the extracellular space. It is found in the extracellular matrix. The protein localises to the basement membrane. Can stimulate endothelial cell proliferation, migration, as well as angiogenesis. Promotes matrix assembly and cell adhesiveness. The polypeptide is SPARC-related modular calcium-binding protein 2 (Smoc2) (Mus musculus (Mouse)).